We begin with the raw amino-acid sequence, 507 residues long: Glutamate--tRNA ligase (507 aa).

Residues 14–24 (PSPTGYLHIGG) carry the 'HIGH' region motif. The short motif at 261–265 (KLSKR) is the 'KMSKS' region element. Residue Lys264 coordinates ATP.

Belongs to the class-I aminoacyl-tRNA synthetase family. Glutamate--tRNA ligase type 1 subfamily. In terms of assembly, monomer.

It localises to the cytoplasm. It catalyses the reaction tRNA(Glu) + L-glutamate + ATP = L-glutamyl-tRNA(Glu) + AMP + diphosphate. Functionally, catalyzes the attachment of glutamate to tRNA(Glu) in a two-step reaction: glutamate is first activated by ATP to form Glu-AMP and then transferred to the acceptor end of tRNA(Glu). The polypeptide is Glutamate--tRNA ligase (Roseiflexus castenholzii (strain DSM 13941 / HLO8)).